Consider the following 361-residue polypeptide: Queuine tRNA-ribosyltransferase (361 aa).

Aspartate 92 (proton acceptor) is an active-site residue. Substrate contacts are provided by residues 92-96 (DSGGF), aspartate 146, glutamine 189, and glycine 216. Positions 247–253 (GVGKPAD) are RNA binding. The active-site Nucleophile is aspartate 266. Residues 271–275 (TRAGR) form an RNA binding; important for wobble base 34 recognition region. Zn(2+)-binding residues include cysteine 304, cysteine 306, cysteine 309, and histidine 335.

Belongs to the queuine tRNA-ribosyltransferase family. As to quaternary structure, homodimer. Within each dimer, one monomer is responsible for RNA recognition and catalysis, while the other monomer binds to the replacement base PreQ1. Zn(2+) is required as a cofactor.

It catalyses the reaction 7-aminomethyl-7-carbaguanine + guanosine(34) in tRNA = 7-aminomethyl-7-carbaguanosine(34) in tRNA + guanine. Its pathway is tRNA modification; tRNA-queuosine biosynthesis. In terms of biological role, catalyzes the base-exchange of a guanine (G) residue with the queuine precursor 7-aminomethyl-7-deazaguanine (PreQ1) at position 34 (anticodon wobble position) in tRNAs with GU(N) anticodons (tRNA-Asp, -Asn, -His and -Tyr). Catalysis occurs through a double-displacement mechanism. The nucleophile active site attacks the C1' of nucleotide 34 to detach the guanine base from the RNA, forming a covalent enzyme-RNA intermediate. The proton acceptor active site deprotonates the incoming PreQ1, allowing a nucleophilic attack on the C1' of the ribose to form the product. After dissociation, two additional enzymatic reactions on the tRNA convert PreQ1 to queuine (Q), resulting in the hypermodified nucleoside queuosine (7-(((4,5-cis-dihydroxy-2-cyclopenten-1-yl)amino)methyl)-7-deazaguanosine). This Rickettsia massiliae (strain Mtu5) protein is Queuine tRNA-ribosyltransferase.